A 213-amino-acid polypeptide reads, in one-letter code: MPDENIFLFVPNLIGYARIVFAIISFYFMPCCPLTASSFYLLSGLLDAFDGHAARALNQGTRFGAMLDMLTDRCSTMCLLVNLALLYPGATLFFQISMSLDVASHWLHLHSSVVRGSESHKMIDLSGNPVLRIYYTSRPALFTLCAGNELFYCLLYLFHFSEGPLVGSVGLFRMGLWVTAPIALLKSLISVIHLITAARNMAALDAADRAKKK.

Residues 1–5 (MPDEN) are Cytoplasmic-facing. A helical membrane pass occupies residues 6–26 (IFLFVPNLIGYARIVFAIISF). Residue tyrosine 27 is a topological domain, lumenal. A helical membrane pass occupies residues 28–48 (FMPCCPLTASSFYLLSGLLDA). Mg(2+) is bound by residues aspartate 47 and aspartate 50. The Cytoplasmic segment spans residues 49-73 (FDGHAARALNQGTRFGAMLDMLTDR). Positions 51, 55, and 61 each coordinate a CDP-1,2-diacyl-sn-glycerol. Mg(2+)-binding residues include aspartate 68 and aspartate 72. Aspartate 72 functions as the Proton acceptor in the catalytic mechanism. The chain crosses the membrane as a helical span at residues 74–94 (CSTMCLLVNLALLYPGATLFF). A topological domain (lumenal) is located at residue glutamine 95. Residues 96-116 (ISMSLDVASHWLHLHSSVVRG) traverse the membrane as a helical segment. Residues 117–139 (SESHKMIDLSGNPVLRIYYTSRP) lie on the Cytoplasmic side of the membrane. Residues 140-160 (ALFTLCAGNELFYCLLYLFHF) form a helical membrane-spanning segment. The Lumenal segment spans residues 161 to 174 (SEGPLVGSVGLFRM). A helical transmembrane segment spans residues 175-195 (GLWVTAPIALLKSLISVIHLI). The Cytoplasmic portion of the chain corresponds to 196 to 213 (TAARNMAALDAADRAKKK).

The protein belongs to the CDP-alcohol phosphatidyltransferase class-I family. Requires Mn(2+) as cofactor. It depends on Mg(2+) as a cofactor. In terms of tissue distribution, detected in placenta (at protein level). Widely expressed. Higher expression in adult liver and skeletal muscle, slightly lower levels seen in pancreas, kidney, lung, placenta, brain, heart, leukocyte, colon, small intestine, ovary, testis, prostate, thymus and spleen. In fetus, expressed in kidney, liver, lung and brain.

It is found in the endoplasmic reticulum membrane. The protein localises to the cell membrane. The catalysed reaction is a CDP-1,2-diacyl-sn-glycerol + myo-inositol = a 1,2-diacyl-sn-glycero-3-phospho-(1D-myo-inositol) + CMP + H(+). Inhibited by PtdIns (product inhibition), phosphatidylinositol phosphate, and nucleoside di- and tri-phosphates. Its function is as follows. Catalyzes the biosynthesis of phosphatidylinositol (PtdIns) as well as PtdIns:inositol exchange reaction. May thus act to reduce an excessive cellular PtdIns content. The exchange activity is due to the reverse reaction of PtdIns synthase and is dependent on CMP, which is tightly bound to the enzyme. This is CDP-diacylglycerol--inositol 3-phosphatidyltransferase from Homo sapiens (Human).